We begin with the raw amino-acid sequence, 367 residues long: Heme A synthase (367 aa).

8 helical membrane-spanning segments follow: residues 26–46 (IRGW…VGGA), 111–131 (LLAR…WVTG), 139–159 (LPLL…WWMV), 174–194 (LATH…IYRG), 212–232 (AAVI…VAGL), 272–292 (FVHR…MIAA), 305–325 (SVLL…TLLL), and 327–347 (VPIG…GFAI). Position 274 (histidine 274) interacts with heme. Residue histidine 335 coordinates heme.

Belongs to the COX15/CtaA family. Type 2 subfamily. In terms of assembly, interacts with CtaB. It depends on heme b as a cofactor.

It localises to the cell membrane. The catalysed reaction is Fe(II)-heme o + 2 A + H2O = Fe(II)-heme a + 2 AH2. Its pathway is porphyrin-containing compound metabolism; heme A biosynthesis; heme A from heme O: step 1/1. Catalyzes the conversion of heme O to heme A by two successive hydroxylations of the methyl group at C8. The first hydroxylation forms heme I, the second hydroxylation results in an unstable dihydroxymethyl group, which spontaneously dehydrates, resulting in the formyl group of heme A. The sequence is that of Heme A synthase from Sinorhizobium medicae (strain WSM419) (Ensifer medicae).